A 338-amino-acid chain; its full sequence is Solute carrier family 35 member B1 homolog (338 aa).

9 helical membrane passes run 9-29, 53-73, 84-104, 111-131, 135-155, 168-188, 213-233, 244-264, and 284-304; these read FVIY…VQEK, LALV…LLTI, GSYV…NMAM, TAVV…VLIG, YSWT…LFMY, TLLG…TGAV, LMLG…YFTI, LIAV…ASFG, and VLLF…LVFA. A Di-lysine motif motif is present at residues 334 to 338; that stretch reads KKLNS.

This sequence belongs to the nucleotide-sugar transporter family. SLC35B subfamily.

The protein resides in the endoplasmic reticulum membrane. Its function is as follows. Probable sugar transporter. The sequence is that of Solute carrier family 35 member B1 homolog (meigo) from Drosophila melanogaster (Fruit fly).